A 506-amino-acid polypeptide reads, in one-letter code: MFPRSILLALSLTAVALGQQVGTNMAENHPSLTWQRCTSSGCQNVNGKVTLDANWRWTHRINDFTNCYTGNEWDTSICPDGVTCAENCALDGADYAGTYGVTSSGTALTLKFVTESQQKNIGSRLYLMADDSNYEIFNLLNKEFTFDVDVSKLPCGLNGALYFSEMAADGGMSSTNTAGAKYGTGYCDSQCPRDIKFIDGEANSEGWEGSPNDVNAGTGNFGACCGEMDIWEANSISSAYTPHPCREPGLQRCEGNTCSVNDRYATECDPDGCDFNSFRMGDKSFYGPGMTVDTNQPITVVTQFITDNGSDNGNLQEIRRIYVQNGQVIQNSNVNIPGIDSGNSISAEFCDQAKEAFGDERSFQDRGGLSGMGSALDRGMVLVLSIWDDHAVNMLWLDSDYPLDASPSQPGISRGTCSRDSGKPEDVEANAGGVQVVYSNIKFGDINSTFNNNGGGGGNPSPTTTRPNSPAQTMWGQCGGQGWTGPTACQSPSTCHVINDFYSQCF.

The first 18 residues, 1–18 (MFPRSILLALSLTAVALG), serve as a signal peptide directing secretion. The tract at residues 19 to 450 (QQVGTNMAEN…IKFGDINSTF (432 aa)) is catalytic. The active-site Nucleophile is E227. The active-site Proton donor is E232. N308 carries N-linked (GlcNAc...) asparagine glycosylation. Positions 405–426 (ASPSQPGISRGTCSRDSGKPED) are disordered. Residues 406–419 (SPSQPGISRGTCSR) show a composition bias toward polar residues. The N-linked (GlcNAc...) asparagine glycan is linked to N447. The disordered stretch occupies residues 449–472 (TFNNNGGGGGNPSPTTTRPNSPAQ). Residues 451-473 (NNNGGGGGNPSPTTTRPNSPAQT) form a linker region. Low complexity predominate over residues 460–470 (PSPTTTRPNSP). Residues 470–506 (PAQTMWGQCGGQGWTGPTACQSPSTCHVINDFYSQCF) form the CBM1 domain. Intrachain disulfides connect C478-C495 and C489-C505.

The protein belongs to the glycosyl hydrolase 7 (cellulase C) family.

It catalyses the reaction Hydrolysis of (1-&gt;4)-beta-D-glucosidic linkages in cellulose and cellotetraose, releasing cellobiose from the non-reducing ends of the chains.. The biological conversion of cellulose to glucose generally requires three types of hydrolytic enzymes: (1) Endoglucanases which cut internal beta-1,4-glucosidic bonds; (2) Exocellobiohydrolases that cut the disaccharide cellobiose from the non-reducing end of the cellulose polymer chain; (3) Beta-1,4-glucosidases which hydrolyze the cellobiose and other short cello-oligosaccharides to glucose. This chain is Exoglucanase (cel2), found in Agaricus bisporus (White button mushroom).